Consider the following 193-residue polypeptide: MNNEVLAYINERLDEAHNYISSIFWVDGVLDYQYSNSDHDFIDHLNSMNPTHTKIVLIHSHGGADGWWIWGSSFLQFKDGSKLYDNEVNRWLNYDGYFIFAGACDSATYDDLGNTFLNKGFDAYFGYTDSVYTVNNARFYSAFFDKGRHLDVTISEARDHAEQQVLSEFGSNSDVVKNKIIGDSSLCLATSDW.

This is an uncharacterized protein from Archaeoglobus fulgidus (strain ATCC 49558 / DSM 4304 / JCM 9628 / NBRC 100126 / VC-16).